The primary structure comprises 969 residues: RNA polymerase-associated protein RapA (969 aa).

The 171-residue stretch at 164–334 (EVGRRHAPRV…FARLRLLDPD (171 aa)) folds into the Helicase ATP-binding domain. Residue 177–184 (DEVGLGKT) participates in ATP binding. The short motif at 280–283 (DEAH) is the DEAH box element. The 155-residue stretch at 492-646 (RVNWLLEKVK…TCPTGRAVYD (155 aa)) folds into the Helicase C-terminal domain.

Belongs to the SNF2/RAD54 helicase family. RapA subfamily. In terms of assembly, interacts with the RNAP. Has a higher affinity for the core RNAP than for the holoenzyme. Its ATPase activity is stimulated by binding to RNAP.

In terms of biological role, transcription regulator that activates transcription by stimulating RNA polymerase (RNAP) recycling in case of stress conditions such as supercoiled DNA or high salt concentrations. Probably acts by releasing the RNAP, when it is trapped or immobilized on tightly supercoiled DNA. Does not activate transcription on linear DNA. Probably not involved in DNA repair. The protein is RNA polymerase-associated protein RapA of Vibrio campbellii (strain ATCC BAA-1116).